Reading from the N-terminus, the 914-residue chain is Calcium-activated chloride channel regulator 1 (914 aa).

The first 21 residues, 1–21 (MGPFKSSVFILILHLLEGALS), serve as a signal peptide directing secretion. The interval 46-199 (DETLIQQIKD…GITGTNVVKK (154 aa)) is metalloprotease domain. His-156 lines the Zn(2+) pocket. Glu-157 is an active-site residue. 2 residues coordinate Zn(2+): His-160 and Asp-167. A VWFA domain is found at 306 to 475 (IVCLVLDKSG…NGLIDAFGAL (170 aa)). Residues Asn-503, Asn-585, Asn-770, Asn-804, Asn-810, Asn-831, Asn-836, and Asn-890 are each glycosylated (N-linked (GlcNAc...) asparagine).

This sequence belongs to the CLCR family. Post-translationally, glycosylated. In terms of processing, the 125-kDa product is autoproteolytically processed by the metalloprotease domain and yields to two cell-surface-associated subunits, a 90-kDa protein and a group of 37- to 41-kDa proteins. The cleavage is necessary for calcium-activated chloride channel (CaCC) activation activity. As to expression, highly expressed in small intestine and colon namely in intestinal basal crypt epithelia and goblet cells, and appendix. Weakly expressed in uterus, testis and kidney. Expressed in the airways epithelium of both asthmatic and healthy patients. Expressed in the bronchial epithelium, especially in mucus-producing goblet cells. Expressed in normal turbinate mucosa and nasal polyp. Expressed in.

Its subcellular location is the secreted. The protein resides in the extracellular space. It is found in the cell membrane. Its function is as follows. May be involved in mediating calcium-activated chloride conductance. May play critical roles in goblet cell metaplasia, mucus hypersecretion, cystic fibrosis and AHR. May be involved in the regulation of mucus production and/or secretion by goblet cells. Involved in the regulation of tissue inflammation in the innate immune response. May play a role as a tumor suppressor. Induces MUC5AC. This chain is Calcium-activated chloride channel regulator 1 (CLCA1), found in Homo sapiens (Human).